Reading from the N-terminus, the 550-residue chain is Arginine--tRNA ligase (550 aa).

The 'HIGH' region signature appears at 130-140 (ANPTGPIHIGG).

The protein belongs to the class-I aminoacyl-tRNA synthetase family. Monomer.

It localises to the cytoplasm. It catalyses the reaction tRNA(Arg) + L-arginine + ATP = L-arginyl-tRNA(Arg) + AMP + diphosphate. The sequence is that of Arginine--tRNA ligase (argS) from Mycobacterium leprae (strain TN).